The sequence spans 409 residues: Argininosuccinate synthase (409 aa).

ATP-binding positions include 12-20 (AYSGGLDTS) and Ala39. Tyr91 provides a ligand contact to L-citrulline. ATP is bound at residue Gly121. L-aspartate-binding residues include Thr123, Asn127, and Asp128. Asn127 lines the L-citrulline pocket. Arg131, Ser180, Ser189, Glu265, and Tyr277 together coordinate L-citrulline.

This sequence belongs to the argininosuccinate synthase family. Type 1 subfamily. As to quaternary structure, homotetramer.

Its subcellular location is the cytoplasm. It catalyses the reaction L-citrulline + L-aspartate + ATP = 2-(N(omega)-L-arginino)succinate + AMP + diphosphate + H(+). Its pathway is amino-acid biosynthesis; L-arginine biosynthesis; L-arginine from L-ornithine and carbamoyl phosphate: step 2/3. The chain is Argininosuccinate synthase from Buchnera aphidicola subsp. Baizongia pistaciae (strain Bp).